The sequence spans 512 residues: ATP synthase subunit alpha (512 aa).

169–176 is a binding site for ATP; it reads GDRQTGKT.

It belongs to the ATPase alpha/beta chains family. F-type ATPases have 2 components, CF(1) - the catalytic core - and CF(0) - the membrane proton channel. CF(1) has five subunits: alpha(3), beta(3), gamma(1), delta(1), epsilon(1). CF(0) has three main subunits: a(1), b(2) and c(9-12). The alpha and beta chains form an alternating ring which encloses part of the gamma chain. CF(1) is attached to CF(0) by a central stalk formed by the gamma and epsilon chains, while a peripheral stalk is formed by the delta and b chains.

The protein resides in the cell inner membrane. The catalysed reaction is ATP + H2O + 4 H(+)(in) = ADP + phosphate + 5 H(+)(out). Its function is as follows. Produces ATP from ADP in the presence of a proton gradient across the membrane. The alpha chain is a regulatory subunit. In Rickettsia bellii (strain OSU 85-389), this protein is ATP synthase subunit alpha.